Reading from the N-terminus, the 84-residue chain is Large ribosomal subunit protein bL27 (84 aa).

It belongs to the bacterial ribosomal protein bL27 family.

The polypeptide is Large ribosomal subunit protein bL27 (Salinispora tropica (strain ATCC BAA-916 / DSM 44818 / JCM 13857 / NBRC 105044 / CNB-440)).